We begin with the raw amino-acid sequence, 913 residues long: Eukaryotic translation initiation factor 3 subunit C (913 aa).

Residues 1–31 (MSRFFANGSDSESESSEEEVQASNFNKANNF) form a disordered region. The span at 11–20 (SESESSEEEV) shows a compositional bias: acidic residues. Over residues 21 to 31 (QASNFNKANNF) the composition is skewed to polar residues. Residues S34, S165, S177, and S186 each carry the phosphoserine modification. Disordered stretches follow at residues 157–195 (FREAPDQESDVDEGEGEAHDSDAERAGADSDGGIGAGTG) and 208–285 (PTKV…EDGE). A compositionally biased stretch (acidic residues) spans 162-171 (DQESDVDEGE). The span at 172-184 (GEAHDSDAERAGA) shows a compositional bias: basic and acidic residues. The span at 214–239 (DEDDSDDSIDWDSDTESETESSEDEN) shows a compositional bias: acidic residues. Basic and acidic residues predominate over residues 244–263 (MRERFLKRTTEKEDKDDDKR). Basic residues predominate over residues 264–276 (KDKRKEQKHKVRK). The 177-residue stretch at 645–821 (FHMHINLELL…ETVVMHRSEP (177 aa)) folds into the PCI domain. The disordered stretch occupies residues 856–913 (RGNMGNRDRGYNRNQNNQGGNWGGQRRDNRNQRNRNQRGHHKQQQQQQQQQVQTIEEE). A compositionally biased stretch (basic residues) spans 887–898 (QRNRNQRGHHKQ).

It belongs to the eIF-3 subunit C family. Component of the eukaryotic translation initiation factor 3 (eIF-3) complex. The eIF-3 complex interacts with pix.

The protein localises to the cytoplasm. Component of the eukaryotic translation initiation factor 3 (eIF-3) complex, which is involved in protein synthesis of a specialized repertoire of mRNAs and, together with other initiation factors, stimulates binding of mRNA and methionyl-tRNAi to the 40S ribosome. The eIF-3 complex specifically targets and initiates translation of a subset of mRNAs involved in cell proliferation. In Drosophila virilis (Fruit fly), this protein is Eukaryotic translation initiation factor 3 subunit C.